The sequence spans 289 residues: D-xylonolactone lactonase (289 aa).

Residue glutamate 17 participates in Fe(2+) binding. D-xylono-1,5-lactone contacts are provided by arginine 98, asparagine 100, glutamate 119, and asparagine 145. Fe(2+) contacts are provided by asparagine 145 and aspartate 195. Catalysis depends on aspartate 195, which acts as the Proton donor/acceptor.

Belongs to the SMP-30/CGR1 family. The cofactor is Fe(2+).

The catalysed reaction is D-xylono-1,5-lactone + H2O = D-xylonate + H(+). Involved in the degradation of D-xylose. Catalyzes the hydrolysis of D-xylonolactone to D-xylonate. The chain is D-xylonolactone lactonase from Caulobacter vibrioides (strain ATCC 19089 / CIP 103742 / CB 15) (Caulobacter crescentus).